The sequence spans 873 residues: Leucine--tRNA ligase (873 aa).

Residues 42-52 (PYPSGKLHMGH) carry the 'HIGH' region motif. Residues 628 to 632 (KMAKS) carry the 'KMSKS' region motif. K631 provides a ligand contact to ATP.

The protein belongs to the class-I aminoacyl-tRNA synthetase family.

The protein localises to the cytoplasm. The enzyme catalyses tRNA(Leu) + L-leucine + ATP = L-leucyl-tRNA(Leu) + AMP + diphosphate. This is Leucine--tRNA ligase from Aromatoleum aromaticum (strain DSM 19018 / LMG 30748 / EbN1) (Azoarcus sp. (strain EbN1)).